The following is a 388-amino-acid chain: Proline-rich protein 5 (388 aa).

2 interaction with RICTOR regions span residues 10–95 (MSSP…LTKG) and 188–218 (HESR…YGLH). Residues 12-31 (SPSLSDLGKREPAAAADERG) form a disordered region. The span at 18-31 (LGKREPAAAADERG) shows a compositional bias: basic and acidic residues. Residue Ser-252 is modified to Phosphoserine. Residues 254–388 (SYNTPLLNPV…EGSGGRQSVV (135 aa)) are disordered. A compositionally biased stretch (polar residues) spans 336 to 346 (TRSSLPRSSPE).

It belongs to the PROTOR family. As to quaternary structure, associated component of the mechanistic target of rapamycin complex 2 (mTORC2). Binds directly to MTOR and RICTOR within the TORC2 complex. Most abundant in kidney and liver. Also highly expressed in brain, spleen, testis and placenta. Overexpressed in several colorectal tumors.

Its function is as follows. Associated subunit of mTORC2, which regulates cell growth and survival in response to hormonal signals. mTORC2 is activated by growth factors, but, in contrast to mTORC1, seems to be nutrient-insensitive. mTORC2 seems to function upstream of Rho GTPases to regulate the actin cytoskeleton, probably by activating one or more Rho-type guanine nucleotide exchange factors. PRR5 plays an important role in regulation of PDGFRB expression and in modulation of platelet-derived growth factor signaling. May act as a tumor suppressor in breast cancer. This Homo sapiens (Human) protein is Proline-rich protein 5 (PRR5).